The chain runs to 691 residues: POU domain, class 6, transcription factor 2 (691 aa).

Basic and acidic residues predominate over residues Met25–Ala36. Disordered stretches follow at residues Met25 to Pro93, Leu186 to Val297, and Ser435 to Ser461. Residues Leu186–Gln195 show a composition bias toward low complexity. Positions Gln196–Gln210 are enriched in pro residues. Residues Ala211–Leu220 are compositionally biased toward low complexity. Over residues Gln221 to Pro238 the composition is skewed to pro residues. Composition is skewed to low complexity over residues Thr239–Pro280 and Ser438–Ser461. Residues Val476–Glu586 form the POU-specific domain. The segment at residues Lys607–Ile666 is a DNA-binding region (homeobox).

The protein belongs to the POU transcription factor family. Class-6 subfamily. As to expression, expressed only within the CNS, where its expression is restricted to the medical habenulla, to a dispersed population of neurons in the dorsal hypothalamus, and to subsets of ganglion and amacrine cells in the retina.

Its subcellular location is the nucleus. Functionally, probable transcription factor likely to be involved in early steps in the differentiation of amacrine and ganglion cells. Recognizes and binds to the DNA sequence 5'-ATGCAAAT-3'. Isoform 1 does not bind DNA. In Homo sapiens (Human), this protein is POU domain, class 6, transcription factor 2 (POU6F2).